The chain runs to 451 residues: AP-4 complex subunit mu (451 aa).

The MHD domain maps to 184 to 450; the sequence is REEIFVDIIE…VTQANSYVAR (267 aa).

Belongs to the adaptor complexes medium subunit family. Adaptor protein complex 4 (AP-4) is a heterotetramer composed of two large adaptins (epsilon-type subunit and beta-type subunit), a medium adaptin (mu-type subunit) and a small adaptin (sigma-type subunit).

The protein localises to the golgi apparatus. It is found in the trans-Golgi network. The protein resides in the membrane. It localises to the coated pit. Its function is as follows. Subunit of novel type of clathrin- or non-clathrin-associated protein coat involved in targeting proteins from the trans-Golgi network (TGN) to the endosomal-lysosomal system. The protein is AP-4 complex subunit mu (AP4M) of Arabidopsis thaliana (Mouse-ear cress).